We begin with the raw amino-acid sequence, 774 residues long: Lon protease 1 (774 aa).

The 194-residue stretch at 9–202 (IPLLPLRGLL…KVIDFINNEK (194 aa)) folds into the Lon N-terminal domain. 354–361 (GPPGVGKT) is an ATP binding site. Residues 590-771 (EDQVGVVTGL…DEVLEHALVG (182 aa)) form the Lon proteolytic domain. Residues Ser-677 and Lys-720 contribute to the active site.

It belongs to the peptidase S16 family. Homohexamer. Organized in a ring with a central cavity. Exists as a mixture of small oligomeric species in solution.

The protein resides in the cytoplasm. The enzyme catalyses Hydrolysis of proteins in presence of ATP.. Functionally, ATP-dependent serine protease that mediates the selective degradation of mutant and abnormal proteins as well as certain short-lived regulatory proteins. Required for cellular homeostasis and for survival from DNA damage and developmental changes induced by stress. Degrades polypeptides processively to yield small peptide fragments that are 5 to 10 amino acids long. Binds to DNA in a double-stranded, site-specific manner. Has been implicated in preventing sigma(G) activity under non-sporulation conditions. The polypeptide is Lon protease 1 (Bacillus subtilis (strain 168)).